A 205-amino-acid chain; its full sequence is Putative epidermin response regulator (205 aa).

The segment at residues 103–200 (KYIKYVNDDF…ERKLGYKILI (98 aa)) is a DNA-binding region (ompR/PhoB-type).

This sequence to the C-terminus of E.coli phosphate regulon transcriptional regulatory protein PhoB.

The sequence is that of Putative epidermin response regulator (epiQ) from Staphylococcus epidermidis.